The following is a 906-amino-acid chain: Protein translocase subunit SecA (906 aa).

ATP contacts are provided by residues Gln89, 107 to 111, and Asp501; that span reads GEGKT. Zn(2+) is bound by residues Cys891, Cys893, Cys902, and His903.

Belongs to the SecA family. In terms of assembly, monomer and homodimer. Part of the essential Sec protein translocation apparatus which comprises SecA, SecYEG and auxiliary proteins SecDF-YajC and YidC. The cofactor is Zn(2+).

The protein localises to the cell inner membrane. Its subcellular location is the cytoplasm. It carries out the reaction ATP + H2O + cellular proteinSide 1 = ADP + phosphate + cellular proteinSide 2.. Its function is as follows. Part of the Sec protein translocase complex. Interacts with the SecYEG preprotein conducting channel. Has a central role in coupling the hydrolysis of ATP to the transfer of proteins into and across the cell membrane, serving both as a receptor for the preprotein-SecB complex and as an ATP-driven molecular motor driving the stepwise translocation of polypeptide chains across the membrane. The protein is Protein translocase subunit SecA of Parvibaculum lavamentivorans (strain DS-1 / DSM 13023 / NCIMB 13966).